Reading from the N-terminus, the 469-residue chain is Adenosylhomocysteinase (469 aa).

Substrate-binding residues include Thr-63, Asp-139, and Glu-164. Thr-165–Thr-167 is an NAD(+) binding site. Substrate-binding residues include Lys-194 and Asp-198. NAD(+)-binding positions include Asn-199, Gly-228 to Gly-233, Glu-251, Asn-300, Ile-321 to His-323, and Asn-375.

This sequence belongs to the adenosylhomocysteinase family. Requires NAD(+) as cofactor.

It localises to the cytoplasm. The catalysed reaction is S-adenosyl-L-homocysteine + H2O = L-homocysteine + adenosine. It participates in amino-acid biosynthesis; L-homocysteine biosynthesis; L-homocysteine from S-adenosyl-L-homocysteine: step 1/1. In terms of biological role, may play a key role in the regulation of the intracellular concentration of adenosylhomocysteine. This Pseudomonas aeruginosa (strain UCBPP-PA14) protein is Adenosylhomocysteinase.